The sequence spans 616 residues: Polypeptide N-acetylgalactosaminyltransferase 3 (616 aa).

The chain crosses the membrane as a helical; Signal-anchor for type II membrane protein span at residues 13 to 33; it reads FFHWKLWKFSIIVFVFLVFLF. The catalytic subdomain A stretch occupies residues 182–291; sequence LPTTSIIIVF…YGWLEPLLAR (110 aa). Positions 275, 277, and 413 each coordinate Mn(2+). A catalytic subdomain B region spans residues 354–416; sequence PIRTPTFAGG…PCSVVGHVFR (63 aa). Residue N482 is glycosylated (N-linked (GlcNAc...) asparagine). Positions 512–616 constitute a Ricin B-type lectin domain; it reads NRMCLDVGEN…FQKWIFGQND (105 aa). An intrachain disulfide couples C515 to C533. UDP-N-acetyl-alpha-D-galactosamine-binding residues include D517, E520, H534, and N539. C588 and C601 form a disulfide bridge.

The protein belongs to the glycosyltransferase 2 family. GalNAc-T subfamily. Mn(2+) serves as cofactor.

It is found in the golgi apparatus. It localises to the golgi stack membrane. It carries out the reaction L-seryl-[protein] + UDP-N-acetyl-alpha-D-galactosamine = a 3-O-[N-acetyl-alpha-D-galactosaminyl]-L-seryl-[protein] + UDP + H(+). It catalyses the reaction L-threonyl-[protein] + UDP-N-acetyl-alpha-D-galactosamine = a 3-O-[N-acetyl-alpha-D-galactosaminyl]-L-threonyl-[protein] + UDP + H(+). It participates in protein modification; protein glycosylation. Its function is as follows. Catalyzes the initial reaction in O-linked oligosaccharide biosynthesis, the transfer of an N-acetyl-D-galactosamine residue to a serine or threonine residue on the protein receptor. Glycosylates FGF23. This is Polypeptide N-acetylgalactosaminyltransferase 3 (GALNT3) from Taeniopygia guttata (Zebra finch).